The primary structure comprises 356 residues: RuBisCO accumulation factor 1 (356 aa).

An N-terminal alpha-helix region spans residues 7–185 (ALTTEVLQRL…RQALEKLLTD (179 aa)). The segment at 209-342 (PYLVPVAGTA…LLLVLRPPQV (134 aa)) is C-terminal beta-sheet.

It belongs to the RAF family. In terms of assembly, homodimer. Forms an RbcL(8)-Raf1(8) complex. Forms complexes of many stoichiometries with RbcL with and without RbcS. RbcX and Raf1 can bind simultaneously to RbcL.

The protein localises to the cytoplasm. In terms of biological role, a major RuBisCO chaperone. Acts after GroEL-GroES chaperonin to fold and/or assemble the large subunit of RuBisCO (ccbL, rbcL). Cooperates with RbcX in RbcL folding, plays the major role in assembly of dimers into RbcL(8)-Raf1(8) intermediate complexes. RbcS replaces Raf1, leading to holoenzyme formation. Required for optimal reconstitution of RuBisCO upon expression of rbcL-rbcS subunits in E.coli. Only interacts with the large subunit (cbbL, rbcL). Probably acts in the final stages of RuBisCO assembly, possibly participating in the addition of the small subunit (ccbS, rbcS). This chain is RuBisCO accumulation factor 1, found in Thermosynechococcus vestitus (strain NIES-2133 / IAM M-273 / BP-1).